Consider the following 363-residue polypeptide: Cell division cycle-associated protein 3 (363 aa).

The segment covering 1-12 (MGSAESKAQVTP) has biased composition (polar residues). Disordered stretches follow at residues 1-81 (MGSA…TPLR), 126-152 (VESQ…KAET), 191-210 (MNDQ…EESP), and 231-363 (ENLN…HSNS). Residues 93-152 (KQLSEVFVAEDSSTEGGPLGFTGPEATNLERQVVESQTAPPAGEHVNDHEVEPSVEKAET) are F-box-like. Basic and acidic residues predominate over residues 137-152 (HVNDHEVEPSVEKAET). Residues 192-210 (NDQEESPIAETMNDQEESP) show a composition bias toward acidic residues. A compositionally biased stretch (polar residues) spans 259 to 285 (SVVSTESTQATGQQQKTRGKSPRSSGV). The span at 296-308 (LLSSSSGRSPLRI) shows a compositional bias: low complexity. Positions 311–321 (EDNSPNTNTQH) are enriched in polar residues. The KEN box signature appears at 353–355 (KEN).

As to quaternary structure, interacts with wee1, when wee1 is phosphorylated at 'Ser-38'. Phosphorylated. Post-translationally, ubiquitinated and degraded by the APC/C-Cdh1 complex during G1 phase.

The protein resides in the cytoplasm. It localises to the cytosol. The protein operates within protein modification; protein ubiquitination. Functionally, F-box-like protein which is required for entry into mitosis. Acts by participating in E3 ligase complexes that mediate the ubiquitination and degradation of WEE1 kinase at G2/M phase. This Xenopus laevis (African clawed frog) protein is Cell division cycle-associated protein 3 (cdca3).